The chain runs to 107 residues: Thiosulfate sulfurtransferase GlpE (107 aa).

The 89-residue stretch at 19–107 (QDLNAVLVDI…WHKAGLPVEK (89 aa)) folds into the Rhodanese domain. Cys-67 acts as the Cysteine persulfide intermediate in catalysis.

Belongs to the GlpE family.

The protein resides in the cytoplasm. It carries out the reaction thiosulfate + hydrogen cyanide = thiocyanate + sulfite + 2 H(+). The catalysed reaction is thiosulfate + [thioredoxin]-dithiol = [thioredoxin]-disulfide + hydrogen sulfide + sulfite + 2 H(+). Functionally, transferase that catalyzes the transfer of sulfur from thiosulfate to thiophilic acceptors such as cyanide or dithiols. May function in a CysM-independent thiosulfate assimilation pathway by catalyzing the conversion of thiosulfate to sulfite, which can then be used for L-cysteine biosynthesis. The protein is Thiosulfate sulfurtransferase GlpE of Aliivibrio fischeri (strain MJ11) (Vibrio fischeri).